The sequence spans 276 residues: Bifunctional protein FolD (276 aa).

Residues 158 to 160, Ser183, and Ile224 contribute to the NADP(+) site; that span reads NRS.

This sequence belongs to the tetrahydrofolate dehydrogenase/cyclohydrolase family. In terms of assembly, homodimer.

It carries out the reaction (6R)-5,10-methylene-5,6,7,8-tetrahydrofolate + NADP(+) = (6R)-5,10-methenyltetrahydrofolate + NADPH. It catalyses the reaction (6R)-5,10-methenyltetrahydrofolate + H2O = (6R)-10-formyltetrahydrofolate + H(+). Its pathway is one-carbon metabolism; tetrahydrofolate interconversion. In terms of biological role, catalyzes the oxidation of 5,10-methylenetetrahydrofolate to 5,10-methenyltetrahydrofolate and then the hydrolysis of 5,10-methenyltetrahydrofolate to 10-formyltetrahydrofolate. The protein is Bifunctional protein FolD of Picrophilus torridus (strain ATCC 700027 / DSM 9790 / JCM 10055 / NBRC 100828 / KAW 2/3).